Consider the following 277-residue polypeptide: Undecaprenyl-diphosphatase (277 aa).

Helical transmembrane passes span 83 to 103, 109 to 129, 188 to 208, 218 to 238, and 256 to 276; these read FALNIIIAFLPAALLGLVFAS, LFAPVPVAIAFIVGGFIILWI, ATEFSFFLAIPTLMGATVYSV, ADIPLFGLGGFAAFVSAFLCV, and YRIVFGLFVLLSAYYGWVVWA.

Belongs to the UppP family.

The protein localises to the cell inner membrane. It catalyses the reaction di-trans,octa-cis-undecaprenyl diphosphate + H2O = di-trans,octa-cis-undecaprenyl phosphate + phosphate + H(+). Catalyzes the dephosphorylation of undecaprenyl diphosphate (UPP). Confers resistance to bacitracin. The polypeptide is Undecaprenyl-diphosphatase (Janthinobacterium sp. (strain Marseille) (Minibacterium massiliensis)).